Reading from the N-terminus, the 207-residue chain is Probable GTP-binding protein EngB (207 aa).

Residues 22–194 (DLPEVAFAGR…LQRLDVALSD (173 aa)) enclose the EngB-type G domain. Residues 30 to 37 (GRSNVGKS), 57 to 61 (GRTQL), 75 to 78 (DLPG), 142 to 145 (TKVD), and 173 to 175 (FSA) each bind GTP. Mg(2+)-binding residues include S37 and T59.

This sequence belongs to the TRAFAC class TrmE-Era-EngA-EngB-Septin-like GTPase superfamily. EngB GTPase family. Requires Mg(2+) as cofactor.

Its function is as follows. Necessary for normal cell division and for the maintenance of normal septation. The polypeptide is Probable GTP-binding protein EngB (Syntrophotalea carbinolica (strain DSM 2380 / NBRC 103641 / GraBd1) (Pelobacter carbinolicus)).